We begin with the raw amino-acid sequence, 372 residues long: MPLPDFHVSEPFTLGIELEMQVVNPPGYDLSQDSSMLIDAVKNEITAGEVKHDITESMLELATDVCRDINQAAGQFSAMQKVVLQAAADHHLEICGGGTHPFQKWQRQEVCDNERYQRTLENFGYLIQQATVFGQHVHVGCASGDDAIYLLHGLSRFVPHFIALSAASPYMQGTDTRFASSRPNIFSAFPDNGPMPWVSNWQQFEALFRCLSYTTMIDSIKDLHWDIRPSPHFGTVEVRVMDTPLTLSHAVNMAGLIQATAHWLLTERPFKHQEKDYLLYKFNRFQACRYGLEGVITDPHTGDRRPLTEDTLRLLEKIAPSAHKMGASSAIEALHRQVVSGLNEAQLMRDFVADGGSLIGLVKKHCEIWAGD.

This sequence belongs to the glutamate--cysteine ligase type 2 family. YbdK subfamily. In terms of assembly, homodimer.

The catalysed reaction is L-cysteine + L-glutamate + ATP = gamma-L-glutamyl-L-cysteine + ADP + phosphate + H(+). In terms of biological role, ATP-dependent carboxylate-amine ligase which exhibits weak glutamate--cysteine ligase activity. This Escherichia coli O8 (strain IAI1) protein is Putative glutamate--cysteine ligase 2 (ybdK).